Here is a 1030-residue protein sequence, read N- to C-terminus: Importin beta-like SAD2 homolog (1030 aa).

At Met-1 the chain carries N-acetylmethionine. In terms of domain architecture, Importin N-terminal spans 25 to 99 (AEQSLNQLQH…RNQILVFVSQ (75 aa)). Disordered regions lie at residues 886-928 (AAKA…GSTL) and 940-964 (SYSD…PIDE). Composition is skewed to acidic residues over residues 890-924 (EEEE…DETD) and 943-964 (DDDD…PIDE).

It belongs to the importin beta family.

Its subcellular location is the cytoplasm. It localises to the nucleus. Its function is as follows. Functions probably in nuclear protein import, either by acting as autonomous nuclear transport receptor or as an adapter-like protein in association with other importin subunits. The protein is Importin beta-like SAD2 homolog of Arabidopsis thaliana (Mouse-ear cress).